Consider the following 111-residue polypeptide: Large ribosomal subunit protein uL22 (111 aa).

Belongs to the universal ribosomal protein uL22 family. In terms of assembly, part of the 50S ribosomal subunit.

This protein binds specifically to 23S rRNA; its binding is stimulated by other ribosomal proteins, e.g. L4, L17, and L20. It is important during the early stages of 50S assembly. It makes multiple contacts with different domains of the 23S rRNA in the assembled 50S subunit and ribosome. Its function is as follows. The globular domain of the protein is located near the polypeptide exit tunnel on the outside of the subunit, while an extended beta-hairpin is found that lines the wall of the exit tunnel in the center of the 70S ribosome. The chain is Large ribosomal subunit protein uL22 from Xylella fastidiosa (strain 9a5c).